Reading from the N-terminus, the 147-residue chain is Membrane-spanning 4-domains subfamily A member 6E (147 aa).

Topologically, residues 1–52 (MTSQPISNETIIMLPSNVINFSQAEKPEPTNQGQDSLKKRLQAKVKVIGVHS) are cytoplasmic. The chain crosses the membrane as a helical span at residues 53 to 73 (SLAGSILSALSALVGFILLSV). Topologically, residues 74 to 120 (NPAALNPASLQCKLDEKDIPTRLLLSYDYHSPYTMDCHRAKASLAGT) are extracellular. Residues 121–141 (LSLMLVSTVLEFCLAVLTAVL) traverse the membrane as a helical segment. The Cytoplasmic portion of the chain corresponds to 142–147 (QWKQTV).

This sequence belongs to the MS4A family. Expressed by malignant and fetal tissue at very low levels.

Its subcellular location is the membrane. In terms of biological role, may be involved in signal transduction as a component of a multimeric receptor complex. The protein is Membrane-spanning 4-domains subfamily A member 6E (MS4A6E) of Homo sapiens (Human).